The sequence spans 125 residues: Fluoride-specific ion channel FluC (125 aa).

The next 4 helical transmembrane spans lie at 4-24, 32-52, 68-88, and 100-120; these read ILLV…VGLW, AFPW…GFLA, FLIT…LDAI, and LAYI…GLAL. Na(+) contacts are provided by Gly-75 and Thr-78.

This sequence belongs to the fluoride channel Fluc/FEX (TC 1.A.43) family.

It is found in the cell inner membrane. It carries out the reaction fluoride(in) = fluoride(out). With respect to regulation, na(+) is not transported, but it plays an essential structural role and its presence is essential for fluoride channel function. In terms of biological role, fluoride-specific ion channel. Important for reducing fluoride concentration in the cell, thus reducing its toxicity. The protein is Fluoride-specific ion channel FluC of Rhizobium meliloti (strain 1021) (Ensifer meliloti).